A 535-amino-acid chain; its full sequence is Zinc transporter ZIP5 (535 aa).

Residues 1–19 form the signal peptide; the sequence is MGPPVHHLLTGLCVGVALG. Topologically, residues 20-210 are extracellular; the sequence is WVGGSVPNLG…PAPPGDVLSA (191 aa). Residues asparagine 49 and asparagine 158 are each glycosylated (N-linked (GlcNAc...) asparagine). A helical transmembrane segment spans residues 211-231; the sequence is LLHSGLAVLFLSLPAPLSLLL. Residues 232-242 are Cytoplasmic-facing; sequence LRLLGPRLLRP. Residues 243–263 form a helical membrane-spanning segment; sequence VLGFLGALAVGTLCGDALLHL. Over 264–285 the chain is Extracellular; that stretch reads LPHAQGGRHTGPSEQSEEDLGP. The helical transmembrane segment at 286-306 threads the bilayer; the sequence is GLSVLGGLFLLFMLENTLGLV. Residues 307–439 are Cytoplasmic-facing; the sequence is RHRGLRPRCC…LLQEGLSFRK (133 aa). A disordered region spans residues 316 to 373; the sequence is CRNKRDLGEPNPDPEDGSGMVLRPLQAASEPEVQGQRENRQSSPSLAPPGHQGHSHEH. Serine 333 is subject to Phosphoserine. Histidine 371 carries the pros-methylhistidine modification. A helical transmembrane segment spans residues 440–460; that stretch reads LLLLSLVSGALGLGGAALGVG. The Extracellular segment spans residues 461 to 465; sequence LSLGP. The helical transmembrane segment at 466–486 threads the bilayer; sequence VPLTPWVFGTTAGVFLYVALV. Residues 487–503 are Cytoplasmic-facing; that stretch reads DMLPTLLRPPEPLPVFH. Residues 504 to 524 form a helical membrane-spanning segment; it reads VLLQGLGLLLGGSLMFTIALL. The Extracellular segment spans residues 525–535; sequence EEQLVPTVPDG.

Belongs to the ZIP transporter (TC 2.A.5) family. In terms of assembly, homodimer. N-Glycosylated. In terms of processing, methylated at His-371 by METTL9. In terms of tissue distribution, expressed in all stages of eye development and primarily in the sclera and several layers of the retina, including the inner segment, outer plexiform layer and ganglion cell layer. Expressed in pancreas, kidney and the proximal and distal small intestine as well as in the embryonic visceral yolk sac. In the proximal intestine, expression is predominant in the crypts but diminishes toward the apical regions of the villi.

Its subcellular location is the basolateral cell membrane. It catalyses the reaction Zn(2+)(in) = Zn(2+)(out). Uniporter that transports zinc(2+) into polarized cells of enterocytes, pancreatic acinar and endoderm cells across the basolateral membrane and participates, notably, in zinc excretion from the intestine by the uptake of zinc from the blood into the intestine. The transport mechanism is temperature- and concentration-dependent and saturable. In addition, is also a high affinity copper transporter in vitro. Also may regulate glucose-stimulated insulin secretion (GSIS) in islets primarily through the zinc-activated SIRT1-PPARGC1A axis. Could regulate the BMP/TGF-beta (bone morphogenetic protein/transforming growth factor-beta) signaling pathway and modulates extracellular matrix (ECM) proteins of the sclera. Plays a role in eye development. The sequence is that of Zinc transporter ZIP5 from Mus musculus (Mouse).